The primary structure comprises 320 residues: dTDP-glucose 4,6-dehydratase (320 aa).

Residues 11–12 (FI), 38–41 (DKLG), 64–65 (DI), 84–88 (FAAET), and S103 each bind NAD(+). T88 contributes to the substrate binding site. A substrate-binding site is contributed by T128. Catalysis depends on D129, which acts as the Proton donor. Catalysis depends on proton acceptor residues E130 and Y152. 152-156 (YAASK) lines the NAD(+) pocket. N181 is a binding site for substrate. N182 contacts NAD(+). Substrate is bound by residues 191-192 (KM), 207-209 (PVY), R216, N251, and 274-278 (DRKGH).

It belongs to the NAD(P)-dependent epimerase/dehydratase family. dTDP-glucose dehydratase subfamily. As to quaternary structure, homodimer. The cofactor is NAD(+).

The catalysed reaction is dTDP-alpha-D-glucose = dTDP-4-dehydro-6-deoxy-alpha-D-glucose + H2O. Probably involved in the biosynthesis of the acarviose moiety of the alpha-glucosidase inhibitor acarbose. Catalyzes the dehydration of dTDP-D-glucose to form dTDP-6-deoxy-D-xylo-4-hexulose via a three-step process involving oxidation, dehydration and reduction. The protein is dTDP-glucose 4,6-dehydratase of Actinoplanes sp. (strain ATCC 31044 / CBS 674.73 / SE50/110).